Reading from the N-terminus, the 900-residue chain is E3 ubiquitin-protein ligase BRE1-like 2 (900 aa).

The segment at 1 to 31 (MENQESDEPMQKKPHLLDSVSPNSMARNSSP) is disordered. A compositionally biased stretch (polar residues) spans 20 to 31 (VSPNSMARNSSP). Coiled coils occupy residues 63 to 96 (TVLQLQNQKLVQQLDLQKKQLYDVESKIQELQLN), 217 to 300 (EDAT…KDAA), 437 to 660 (SRIE…AEME), and 706 to 737 (SEKQVMEKQLHQVNASVENFKARIAHNEEQMK). An RING-type zinc finger spans residues 848–887 (CGVCFDRPKEVVIVKCYHLFCQQCIQRSLEIRHRKCPGCG).

Belongs to the BRE1 family. As to quaternary structure, may act as a tetramer consisting of two copies of HUB1 and two copies of HUB2. As to expression, ubiquitously expressed.

It is found in the nucleus. It carries out the reaction S-ubiquitinyl-[E2 ubiquitin-conjugating enzyme]-L-cysteine + [acceptor protein]-L-lysine = [E2 ubiquitin-conjugating enzyme]-L-cysteine + N(6)-ubiquitinyl-[acceptor protein]-L-lysine.. It participates in protein modification; protein ubiquitination. Functionally, E3 ubiquitin-protein ligase that monoubiquitinates H2B to form H2BK143ub1. H2BK143ub1 gives a specific tag for epigenetic transcriptional activation and is also prerequisite for H3K4me and maybe H3K79me. It thereby plays a central role in histone code and gene regulation. Forms a ubiquitin ligase complex in cooperation with the E2 enzyme UBC2/RAD6. The sequence is that of E3 ubiquitin-protein ligase BRE1-like 2 (HUB2) from Arabidopsis thaliana (Mouse-ear cress).